Reading from the N-terminus, the 201-residue chain is Prostamide/prostaglandin F synthase (201 aa).

This sequence belongs to the peroxiredoxin-like PRXL2 family. Prostamide/prostaglandin F synthase subfamily.

Its subcellular location is the cytoplasm. The protein localises to the cytosol. The enzyme catalyses prostaglandin H2 + [thioredoxin]-dithiol = prostaglandin F2alpha + [thioredoxin]-disulfide. It carries out the reaction prostamide F2alpha + [thioredoxin]-disulfide = prostamide H2 + [thioredoxin]-dithiol. Catalyzes the reduction of prostaglandin-ethanolamide H(2) (prostamide H(2)) to prostamide F(2alpha) with NADPH as proton donor. Also able to reduce prostaglandin H(2) to prostaglandin F(2alpha). In Danio rerio (Zebrafish), this protein is Prostamide/prostaglandin F synthase (prxl2b).